Here is a 524-residue protein sequence, read N- to C-terminus: GMP synthase [glutamine-hydrolyzing] (524 aa).

Positions 8–206 constitute a Glutamine amidotransferase type-1 domain; sequence RILILDFGSQ…IYDICGCEAL (199 aa). Cysteine 85 serves as the catalytic Nucleophile. Residues histidine 180 and glutamate 182 contribute to the active site. Positions 207 to 399 constitute a GMPS ATP-PPase domain; that stretch reads WEPRHIIAKS…LGLPFELVYR (193 aa). 234–240 provides a ligand contact to ATP; it reads SGGVDSS.

Homodimer.

It catalyses the reaction XMP + L-glutamine + ATP + H2O = GMP + L-glutamate + AMP + diphosphate + 2 H(+). It participates in purine metabolism; GMP biosynthesis; GMP from XMP (L-Gln route): step 1/1. Catalyzes the synthesis of GMP from XMP. The polypeptide is GMP synthase [glutamine-hydrolyzing] (Nitrosococcus oceani (strain ATCC 19707 / BCRC 17464 / JCM 30415 / NCIMB 11848 / C-107)).